A 328-amino-acid chain; its full sequence is GMP reductase (328 aa).

The active-site Thioimidate intermediate is the Cys176. 205 to 228 provides a ligand contact to NADP(+); sequence IIADGGIRTHGDIAKSIRFGASMI.

The protein belongs to the IMPDH/GMPR family. GuaC type 2 subfamily.

It carries out the reaction IMP + NH4(+) + NADP(+) = GMP + NADPH + 2 H(+). Functionally, catalyzes the irreversible NADPH-dependent deamination of GMP to IMP. It functions in the conversion of nucleobase, nucleoside and nucleotide derivatives of G to A nucleotides, and in maintaining the intracellular balance of A and G nucleotides. The chain is GMP reductase from Streptococcus pneumoniae (strain Taiwan19F-14).